Consider the following 346-residue polypeptide: Inositol 2-dehydrogenase (346 aa).

Belongs to the Gfo/Idh/MocA family. Homotetramer.

The catalysed reaction is myo-inositol + NAD(+) = scyllo-inosose + NADH + H(+). Functionally, involved in the oxidation of myo-inositol (MI) to 2-keto-myo-inositol (2KMI or 2-inosose). In Rhodococcus erythropolis (strain PR4 / NBRC 100887), this protein is Inositol 2-dehydrogenase.